The primary structure comprises 407 residues: Multifunctional CCA protein (407 aa).

Residues Gly8 and Arg11 each contribute to the ATP site. CTP is bound by residues Gly8 and Arg11. Residues Asp21 and Asp23 each coordinate Mg(2+). 3 residues coordinate ATP: Arg91, Arg137, and Arg140. 3 residues coordinate CTP: Arg91, Arg137, and Arg140. Residues Cys225–Leu326 enclose the HD domain.

It belongs to the tRNA nucleotidyltransferase/poly(A) polymerase family. Bacterial CCA-adding enzyme type 1 subfamily. Monomer. Can also form homodimers and oligomers. It depends on Mg(2+) as a cofactor. Requires Ni(2+) as cofactor.

It carries out the reaction a tRNA precursor + 2 CTP + ATP = a tRNA with a 3' CCA end + 3 diphosphate. It catalyses the reaction a tRNA with a 3' CCA end + 2 CTP + ATP = a tRNA with a 3' CCACCA end + 3 diphosphate. Functionally, catalyzes the addition and repair of the essential 3'-terminal CCA sequence in tRNAs without using a nucleic acid template. Adds these three nucleotides in the order of C, C, and A to the tRNA nucleotide-73, using CTP and ATP as substrates and producing inorganic pyrophosphate. tRNA 3'-terminal CCA addition is required both for tRNA processing and repair. Also involved in tRNA surveillance by mediating tandem CCA addition to generate a CCACCA at the 3' terminus of unstable tRNAs. While stable tRNAs receive only 3'-terminal CCA, unstable tRNAs are marked with CCACCA and rapidly degraded. In Chromobacterium violaceum (strain ATCC 12472 / DSM 30191 / JCM 1249 / CCUG 213 / NBRC 12614 / NCIMB 9131 / NCTC 9757 / MK), this protein is Multifunctional CCA protein.